Reading from the N-terminus, the 116-residue chain is MANHRIDRVGMEIKREVNDILQKKVRDPRVQGVTITEVQMQGDLSLAKVYYTIMSDLASDNQKAQTGLEKATGTIKRELGKQLTMYKIPDLVFEKDNSIAYGNKIDQLLRDLDNKS.

This sequence belongs to the RbfA family. As to quaternary structure, monomer. Binds 30S ribosomal subunits, but not 50S ribosomal subunits or 70S ribosomes.

Its subcellular location is the cytoplasm. Its function is as follows. One of several proteins that assist in the late maturation steps of the functional core of the 30S ribosomal subunit. Associates with free 30S ribosomal subunits (but not with 30S subunits that are part of 70S ribosomes or polysomes). Required for efficient processing of 16S rRNA. May interact with the 5'-terminal helix region of 16S rRNA. In Streptococcus pyogenes serotype M3 (strain SSI-1), this protein is Ribosome-binding factor A.